The sequence spans 800 residues: MSKIIMNKKNNDTPMIKQYLSLKLHYPNMFLFYRLGDFYELFFDDAKRISLMLDITLTKRGYSSQKEIPMAGIPYTSLNRYLSKLLKIGESAVICEQTHIIDKRTGLIERKISRVVTPGTVIDEEFLSETKNNLLGSVYYSKKRFGYATLDLCSGNFYISEYDTFESFISELQRTDPEELLIQEDFLYMNFFEKRKGIRLCKLNDFNIDSAYQQLKCHFKTKNLKSFGVYQNNLAISAAGCLLKYLKFIQYSLLPHVKSIKVRYDCNHIFMNSATRKNLEIINNISGKKEHTLLSILDNTATPMGGRLLRKWLSAPIKDIKIINKRHNIIKSLKTVYMSLSLLLKGIGDLERIISRIACRSASPKDFVSMRSALLQFSKIIFVLNSTKSKTLELISCKIKEYNSILILLRRSLKVCPSKTIKEGNVISENYNKDLDKWRKIANNASEYLQYFEVSERKRLHITSLKVNNNRVLGYYVQISKKDIKLAPNNYKKIQTLKHCVRYSTLELLDYENNVNNAKDKVLEIENYLYNELFDFIIPYIDSLKISVNTISELDVLNNLTERACVLNYVCPVISDEYGILLTDSRHPVVENLLKTPFVKNSINLSKSSNMLIITGPNMGGKSTYMRQIALIVIMAYIGSFVPAKYARIGLCDKIFTRIGSADNLAYGESTFMMEMIEMSSILRNSTSNSLVLIDELGRGTSMHDGLSLAWACIEYLAGKINAMTLFSTHYFELTKLKNYYSNIRNMYFDVLEHNNEIVFTYVIKNGFINKSYGLVVAALAKLPKCILLSAKKKLKEFYP.

616–623 (GPNMGGKS) provides a ligand contact to ATP.

This sequence belongs to the DNA mismatch repair MutS family.

Its function is as follows. This protein is involved in the repair of mismatches in DNA. It is possible that it carries out the mismatch recognition step. This protein has a weak ATPase activity. This Buchnera aphidicola subsp. Baizongia pistaciae (strain Bp) protein is DNA mismatch repair protein MutS.